Consider the following 36-residue polypeptide: Photosystem I reaction center subunit VIII (36 aa).

Residues Ile-9–Tyr-29 traverse the membrane as a helical segment.

The protein belongs to the PsaI family.

It localises to the plastid. It is found in the chloroplast thylakoid membrane. Its function is as follows. May help in the organization of the PsaL subunit. This chain is Photosystem I reaction center subunit VIII, found in Staurastrum punctulatum (Green alga).